A 207-amino-acid polypeptide reads, in one-letter code: Antitermination protein Q (207 aa).

The tract at residues 1-28 is disordered; the sequence is MRLESVAKFHSPKSPMMSDSPRATASDS. Residues cysteine 118, cysteine 121, cysteine 144, and cysteine 147 each contribute to the Zn(2+) site. Residues 118–147 fold into a zinc finger; that stretch reads CRNCHGTGRAVDIAKTEQWGRVVEKECGRC. Residues 171–192 mediate DNA binding; sequence LTQPTWSRTVKPLYDALVVQCH.

Belongs to the phage antitermination Q type 2 family. Interacts with host RPOB (via flap domain); this interaction renders host RNAP resistant to transcription pausing and allows it to read through termination signals. Interacts with host RNA polymerase sigma factor RPOD (via domain-4). Interacts with host NusA (via N-terminus and AR2 domain); this interaction releases the autoinhibition of NusA.

Functionally, mediates the switch from middle to viral late gene expression by associating with host RNA polymerase (RNAP) so that the latter can read without pausing and through transcription terminators preceding late genes. Competes with host factor sigma 70 for binding to RPOB, the beta-subunit of host RNAP. To join the elongation complex, binds a specific DNA Q-binding element (QBE) and interacts with RNAP that is paused during early elongation. Participates in the lysis-lysogeny decision by activating the expression of the late lytic genes. The sequence is that of Antitermination protein Q (23) from Salmonella typhimurium.